A 559-amino-acid chain; its full sequence is Regulatory protein PHO2 (559 aa).

Disordered regions lie at residues 16–88 (ATDL…KGEA), 132–158 (LRKK…DYDR), 293–333 (INSN…AKDN), and 534–559 (PTDS…HRWI). Low complexity-rich tracts occupy residues 24-52 (HDQQ…IQTQ) and 63-74 (NDMSASSNASDS). Positions 77–136 (QRPKRTRAKGEALDVLKRKFEINPTPSLVERKKISDLIGMPEKNVRIWFQNRRAKLRKKQ) form a DNA-binding region, homeobox. Over residues 141-151 (KDTIPSSQSRD) the composition is skewed to polar residues. Residues 293-307 (INSNNTSDKNNSNTN) show a composition bias toward low complexity. Residues 308–323 (NDDDNDDNSNEDNDNS) are compositionally biased toward acidic residues. The span at 324 to 333 (SEDKRNAKDN) shows a compositional bias: basic and acidic residues. Phosphothreonine is present on T542.

The protein localises to the nucleus. In terms of biological role, regulator in phosphate metabolism and acts as a derepressor of another central regulator PHO5. Binds to the upstream activator sequence (UAS) of PHO5. It also binds to the TRP4, HIS4, and CYC1 promoters. This is Regulatory protein PHO2 (PHO2) from Saccharomyces cerevisiae (strain ATCC 204508 / S288c) (Baker's yeast).